Reading from the N-terminus, the 810-residue chain is Protein 4.1 (810 aa).

The segment at 1–124 (MTTEKSLVAE…KEIEFGTSLD (124 aa)) is disordered. Serine 14 is subject to Phosphoserine. Threonine 61 is subject to Phosphothreonine. The segment covering 62–76 (PTHEDLTKNKERTSE) has biased composition (basic and acidic residues). 10 positions are modified to phosphoserine: serine 85, serine 86, serine 96, serine 105, serine 122, serine 150, serine 152, serine 153, serine 189, and serine 192. Residues 102-118 (DVESAKEKCEGGQKEIE) are compositionally biased toward basic and acidic residues. Residues 152-203 (SSAETQPAQEEHREDPDFETKEGGGLEECSKIEVKEESPESKAERELKASQK) are disordered. Basic and acidic residues predominate over residues 160 to 200 (QEEHREDPDFETKEGGGLEECSKIEVKEESPESKAERELKA). The 282-residue stretch at 211-492 (MHCKVSLLDD…EHHTFFRLTS (282 aa)) folds into the FERM domain. Tyrosine 223 is modified (phosphotyrosine). Threonine 379 bears the Phosphothreonine mark. The disordered stretch occupies residues 518 to 613 (TRQASALIDR…DQAEPEPTEV (96 aa)). 4 positions are modified to phosphoserine: serine 522, serine 541, serine 543, and serine 555. A compositionally biased stretch (basic and acidic residues) spans 587–601 (AQKETVKDEEKKEEG). A spectrin--actin-binding region spans residues 615 to 659 (KDLDKSQEEIKKHHASISELKKNFMESVPEPRPSEWDKRLSTHSP). Serine 620, serine 630, serine 655, and serine 658 each carry phosphoserine. The C-terminal (CTD) stretch occupies residues 660 to 810 (FRTLNINGQL…VHQETEISEE (151 aa)). Phosphothreonine is present on residues threonine 682 and threonine 805.

As to quaternary structure, binds with a high affinity to glycophorin and with lower affinity to band III protein. Associates with the nuclear mitotic apparatus. Binds calmodulin, CPAP and DLG1. Also found to associate with contractile apparatus and tight junctions. Interacts with NUMA1; this interaction is negatively regulated by CDK1 during metaphase and promotes for anaphase-specific localization of NUMA1 in symmetrically dividing cells. Interacts with ATP2B1; regulates small intestinal calcium absorption through regulation of membrane expression of ATP2B1. O-glycosylated; contains N-acetylglucosamine side chains in the C-terminal domain. In terms of processing, phosphorylated at multiple sites by different protein kinases and each phosphorylation event selectively modulates the protein's functions.

It localises to the nucleus. Its subcellular location is the cytoplasm. The protein resides in the cytoskeleton. It is found in the cell cortex. In terms of biological role, protein 4.1 is a major structural element of the erythrocyte membrane skeleton. It plays a key role in regulating membrane physical properties of mechanical stability and deformability by stabilizing spectrin-actin interaction. Recruits DLG1 to membranes. Required for dynein-dynactin complex and NUMA1 recruitment at the mitotic cell cortex during anaphase. This is Protein 4.1 from Canis lupus familiaris (Dog).